A 413-amino-acid polypeptide reads, in one-letter code: Alpha-1-antitrypsin-like protein CM55-ST (413 aa).

Positions 1-24 (MPSSISWGLLLLAALSCLGPGSLA) are cleaved as a signal peptide. Gln25 bears the Pyrrolidone carboxylic acid mark. Asn65, Asn102, Asn165, and Asn266 each carry an N-linked (GlcNAc...) asparagine glycan. Residues 368–387 (GGTVLGNIRSTLRYEVIFDR) are RCL.

This sequence belongs to the serpin family. As to expression, expressed in liver.

The chain is Alpha-1-antitrypsin-like protein CM55-ST from Tamias sibiricus (Siberian chipmunk).